Here is a 421-residue protein sequence, read N- to C-terminus: Serine hydroxymethyltransferase (421 aa).

(6S)-5,6,7,8-tetrahydrofolate-binding positions include Leu-121 and 125–127; that span reads GHL. Lys-230 is modified (N6-(pyridoxal phosphate)lysine). 355–357 provides a ligand contact to (6S)-5,6,7,8-tetrahydrofolate; that stretch reads SPF.

Belongs to the SHMT family. In terms of assembly, homodimer. It depends on pyridoxal 5'-phosphate as a cofactor.

It is found in the cytoplasm. The catalysed reaction is (6R)-5,10-methylene-5,6,7,8-tetrahydrofolate + glycine + H2O = (6S)-5,6,7,8-tetrahydrofolate + L-serine. It participates in one-carbon metabolism; tetrahydrofolate interconversion. Its pathway is amino-acid biosynthesis; glycine biosynthesis; glycine from L-serine: step 1/1. Functionally, catalyzes the reversible interconversion of serine and glycine with tetrahydrofolate (THF) serving as the one-carbon carrier. This reaction serves as the major source of one-carbon groups required for the biosynthesis of purines, thymidylate, methionine, and other important biomolecules. Also exhibits THF-independent aldolase activity toward beta-hydroxyamino acids, producing glycine and aldehydes, via a retro-aldol mechanism. In Psychromonas ingrahamii (strain DSM 17664 / CCUG 51855 / 37), this protein is Serine hydroxymethyltransferase.